Here is a 152-residue protein sequence, read N- to C-terminus: Ribosome maturation factor RimP (152 aa).

The protein belongs to the RimP family.

It is found in the cytoplasm. Functionally, required for maturation of 30S ribosomal subunits. This chain is Ribosome maturation factor RimP, found in Clostridium beijerinckii (strain ATCC 51743 / NCIMB 8052) (Clostridium acetobutylicum).